Here is a 268-residue protein sequence, read N- to C-terminus: Tryptophan synthase alpha chain (268 aa).

Residues Glu49 and Asp60 each act as proton acceptor in the active site.

It belongs to the TrpA family. Tetramer of two alpha and two beta chains.

It catalyses the reaction (1S,2R)-1-C-(indol-3-yl)glycerol 3-phosphate + L-serine = D-glyceraldehyde 3-phosphate + L-tryptophan + H2O. It functions in the pathway amino-acid biosynthesis; L-tryptophan biosynthesis; L-tryptophan from chorismate: step 5/5. The alpha subunit is responsible for the aldol cleavage of indoleglycerol phosphate to indole and glyceraldehyde 3-phosphate. The sequence is that of Tryptophan synthase alpha chain from Shigella dysenteriae serotype 1 (strain Sd197).